A 2517-amino-acid polypeptide reads, in one-letter code: Non-reducing polyketide synthase pkbA (2517 aa).

The tract at residues 59–250 (LERVAGPAEK…KRFDLRGRFH (192 aa)) is N-terminal acylcarrier protein transacylase domain (SAT). The region spanning 380-775 (SEPIAIIGMG…SANTVSSLKE (396 aa)) is the Ketosynthase family 3 (KS3) domain. Residues Cys547, His682, and His721 each act as for beta-ketoacyl synthase activity in the active site. The malonyl-CoA:ACP transacylase (MAT) domain stretch occupies residues 849-1158 (AFGGQVARSV…TGTAALADAT (310 aa)). Residue Ser935 is the For acyl/malonyl transferase activity of the active site. The segment at 1221–1353 (EEFLTFVKYK…GTVVLRENDT (133 aa)) is N-terminal hotdog fold. Residues 1221–1530 (EEFLTFVKYK…FTRVQISSLG (310 aa)) form the PKS/mFAS DH domain. Residues 1251–1525 (FVKGHAVLAE…ILGAHFTRVQ (275 aa)) are product template (PT) domain. His1255 serves as the catalytic Proton acceptor; for dehydratase activity. A C-terminal hotdog fold region spans residues 1379-1530 (DCHILQGPVV…FTRVQISSLG (152 aa)). The Proton donor; for dehydratase activity role is filled by Asp1437. The 78-residue stretch at 1574–1651 (RPTLEISEKL…SISKCLASYL (78 aa)) folds into the Carrier 1 domain. Ser1611 bears the O-(pantetheine 4'-phosphoryl)serine mark. The segment at 1659-1684 (QPEDLADADSVESDSDMPTGAVTSGI) is disordered. The segment covering 1662-1673 (DLADADSVESDS) has biased composition (acidic residues). Positions 1685–1761 (TTPDDAVSRL…DLIALVPALN (77 aa)) constitute a Carrier 2 domain. Ser1721 bears the O-(pantetheine 4'-phosphoryl)serine mark. The interval 1976 to 2075 (LELGGGTGGT…IHRMLRPDGF (100 aa)) is methyltransferase (CMeT) domain. Positions 2200 to 2514 (LMIHGGGHIM…RGYDFLKEEV (315 aa)) are thioesterase (TE) domain.

Requires pantetheine 4'-phosphate as cofactor.

The enzyme catalyses 3 malonyl-CoA + acetyl-CoA + S-adenosyl-L-methionine + H(+) = 3-methylorsellinate + S-adenosyl-L-homocysteine + 3 CO2 + 4 CoA. It functions in the pathway phytotoxin biosynthesis. In terms of biological role, non-reducing polyketide synthase; part of the gene cluster that mediates the biosynthesis of cichorine, a phytotoxin active against knapweed, corn, and soybeans. The first step in the pathway is performed by the non-reducing polyketide synthase pkbA that condenses one acetyl-CoA starter unit with 3 malonyl-CoA units. PkbA also catalyzes one methylation step to produce 3-methylorsellinate. The nonribosomal peptide synthase-like protein cicB, the cytochrome P450 monooxygenase cicH and the O-methyltransferase cicE are involved in the conversion of 3-methylorsellinate into nidulol. CicB converts 3-methylorsellinate to a yet unidentified intermediate, cicH may play a ring-closing role for cichorine and cicE is plausibly responsible for the methylation of one of the phenol groups. The oxidoreductase cicC acts downstream with still unidentified enzymes to further convert nidulol into cichorin. The polypeptide is Non-reducing polyketide synthase pkbA (Emericella nidulans (strain FGSC A4 / ATCC 38163 / CBS 112.46 / NRRL 194 / M139) (Aspergillus nidulans)).